A 356-amino-acid polypeptide reads, in one-letter code: C-C chemokine receptor type 8 (356 aa).

Over 1–35 (MDYTLDPSMTTMTDYYYPDSLSSPCDGELIQRNDK) the chain is Extracellular. The helical transmembrane segment at 36 to 63 (LLLAVFYCLLFVFSLLGNSLVILVLVVC) threads the bilayer. Over 64–73 (KKLRNITDIY) the chain is Cytoplasmic. A helical transmembrane segment spans residues 74 to 93 (LLNLALSDLLFVFSFPFQTY). Over 94–107 (YQLDQWVFGTVMCK) the chain is Extracellular. Cysteine 106 and cysteine 184 form a disulfide bridge. Residues 108–129 (VVSGFYYIGFYSSMFFITLMSV) form a helical membrane-spanning segment. Residues 130-146 (DRYLAVVHAVYAIKVRT) are Cytoplasmic-facing. Residues 147–172 (IRMGTTTLSLLVWLTAIMATIPLLVF) form a helical membrane-spanning segment. Topologically, residues 173–203 (YQVASEDGVLQCYSFYNQQTLKWKIFTNFEM) are extracellular. Residues 204-223 (NILGLLIPFTIFMFCYIKIL) form a helical membrane-spanning segment. The Cytoplasmic portion of the chain corresponds to 224 to 239 (HQLKRCQNHNKTKAIR). The helical transmembrane segment at 240–264 (LVLIVVIASLLFWVPFNVVLFLTSL) threads the bilayer. At 265 to 281 (HSMHILDGCSISQQLNY) the chain is on the extracellular side. The chain crosses the membrane as a helical span at residues 282–305 (ATHVTEIISFTHCCVNPVIYAFVG). Residues 306-356 (EKFKKHLSEIFQKSCSHIFIYLGRQMPRESCEKSSSCQQHSFRSSSIDYIL) lie on the Cytoplasmic side of the membrane.

Belongs to the G-protein coupled receptor 1 family.

The protein localises to the cell membrane. In terms of biological role, receptor for the chemokines CCL1/SCYA1/I-309. May regulate monocyte chemotaxis and thymic cell line apoptosis. This is C-C chemokine receptor type 8 (CCR8) from Macaca mulatta (Rhesus macaque).